Consider the following 283-residue polypeptide: Pantothenate synthetase (283 aa).

An ATP-binding site is contributed by 30-37 (MGNLHNGH). His-37 functions as the Proton donor in the catalytic mechanism. Gln-61 lines the (R)-pantoate pocket. Gln-61 provides a ligand contact to beta-alanine. ATP is bound at residue 149–152 (GEKD). Gln-155 lines the (R)-pantoate pocket. Residue 186–189 (LSSR) participates in ATP binding.

The protein belongs to the pantothenate synthetase family. Homodimer.

It is found in the cytoplasm. It catalyses the reaction (R)-pantoate + beta-alanine + ATP = (R)-pantothenate + AMP + diphosphate + H(+). The protein operates within cofactor biosynthesis; (R)-pantothenate biosynthesis; (R)-pantothenate from (R)-pantoate and beta-alanine: step 1/1. Functionally, catalyzes the condensation of pantoate with beta-alanine in an ATP-dependent reaction via a pantoyl-adenylate intermediate. The polypeptide is Pantothenate synthetase (Shigella flexneri serotype 5b (strain 8401)).